Here is a 231-residue protein sequence, read N- to C-terminus: Thrombin-like enzyme leucurobin (231 aa).

Positions 1-223 (VIGGDECDIN…YLPWIQSIIA (223 aa)) constitute a Peptidase S1 domain. 6 disulfides stabilise this stretch: cysteine 7–cysteine 139, cysteine 26–cysteine 42, cysteine 74–cysteine 230, cysteine 118–cysteine 184, cysteine 150–cysteine 163, and cysteine 174–cysteine 199. Active-site charge relay system residues include histidine 41 and aspartate 86. N-linked (GlcNAc...) asparagine glycosylation is present at asparagine 146. Residue serine 178 is the Charge relay system of the active site. A glycan (N-linked (GlcNAc...) asparagine) is linked at asparagine 225.

Belongs to the peptidase S1 family. Snake venom subfamily. Monomer. Post-translationally, glycosylated. In terms of tissue distribution, expressed by the venom gland.

The protein localises to the secreted. It catalyses the reaction Selective cleavage of Arg-|-Xaa bond in fibrinogen, to form fibrin, and release fibrinopeptide A. The specificity of further degradation of fibrinogen varies with species origin of the enzyme.. Its activity is regulated as follows. Inhibited by PMSF and benzamidine. Its clotting effect is strongly inhibited by antibothropic serum. Is not inhibited by heparin. Its function is as follows. Thrombin-like snake venom serine protease that cleaves Arg-Gly bonds in alpha-chain of fibrinogen (FGA). Induces temporary episodes of opisthotonos and rapid rolling around the long axis of the animal (gyroxin-like effect), when injected into the tail veins of mice (0.143 ug/g mouse). In Bothrops leucurus (Whitetail lancehead), this protein is Thrombin-like enzyme leucurobin.